The primary structure comprises 886 residues: Phycobiliprotein ApcE (886 aa).

Cys187 contributes to the (2R,3E)-phycocyanobilin binding site. 3 PBS-linker domains span residues 244–424, 496–678, and 695–876; these read DLQG…FRKV, QVRP…ISSK, and NDIQ…SVVV.

It belongs to the phycobilisome linker protein family. In terms of processing, contains one covalently linked bilin chromophore. This protein autochromophorylates (Potential).

It is found in the plastid. The protein resides in the chloroplast thylakoid membrane. In terms of biological role, this protein is postulated to act both as terminal energy acceptor and as a linker polypeptide that stabilizes the phycobilisome architecture. May have intrinsic bilin lyase activity. In Porphyra purpurea (Red seaweed), this protein is Phycobiliprotein ApcE (apcE).